A 332-amino-acid polypeptide reads, in one-letter code: uncharacterized protein (332 aa).

2 stretches are compositionally biased toward acidic residues: residues 290–314 (EDID…DSFG) and 323–332 (EDSEDSDNSE). The interval 290–332 (EDIDDIDDSDESDDSDDSEDSDSFGDSDSSGNSEDSEDSDNSE) is disordered.

The protein belongs to the mimivirus L17x/L18x family.

This is an uncharacterized protein from Acanthamoeba polyphaga mimivirus (APMV).